Consider the following 212-residue polypeptide: Photosynthetic NDH subunit of subcomplex B 5, chloroplastic (212 aa).

The N-terminal 48 residues, 1–48 (MATVTILSPKSIPKVTDSKFGARVSDQIVNVVKCGKSGRRLKLAKLVS), are a transit peptide targeting the chloroplast. Helical transmembrane passes span 115 to 135 (FQGL…YFDA) and 136 to 156 (PGEY…IIEM).

In terms of assembly, part of the chloroplast NDH complex, composed of a mixture of chloroplast and nucleus encoded subunits. Component of the NDH subcomplex B, at least composed of PnsB1, PnsB2, PnsB3, PnsB4 and PnsB5.

It is found in the plastid. Its subcellular location is the chloroplast membrane. In terms of biological role, NDH shuttles electrons from NAD(P)H:plastoquinone, via FMN and iron-sulfur (Fe-S) centers, to quinones in the photosynthetic chain and possibly in a chloroplast respiratory chain. The immediate electron acceptor for the enzyme in this species is believed to be plastoquinone. Couples the redox reaction to proton translocation, and thus conserves the redox energy in a proton gradient. The sequence is that of Photosynthetic NDH subunit of subcomplex B 5, chloroplastic from Arabidopsis thaliana (Mouse-ear cress).